The following is a 78-amino-acid chain: MAQQRRGGRRRRKVDFIAANHIDYIDYKDVDLLKRFISERGKILPRRVTGTSAKNQRKLTVAIKRARVMGLLPFVAED.

This sequence belongs to the bacterial ribosomal protein bS18 family. As to quaternary structure, part of the 30S ribosomal subunit. Forms a tight heterodimer with protein bS6.

Functionally, binds as a heterodimer with protein bS6 to the central domain of the 16S rRNA, where it helps stabilize the platform of the 30S subunit. The protein is Small ribosomal subunit protein bS18 of Lactobacillus johnsonii (strain CNCM I-12250 / La1 / NCC 533).